We begin with the raw amino-acid sequence, 403 residues long: MNRKVSKFLKDYRVILLIVLVAASITAISTMGIQQGLDLQGGSLIQIQLERPVDAATMNTVTSVLDKRLNIFGVKDVKVRASGDQNVIVEIAGVQPDQVADIVGKPGKFEAKIGNETVLTGTDIVSVQPPIITGNEWEVPFRLSTDGARKFAEAARGKAGEPVKMYLDDRLITAPEISAEVATGKPVTDVRITGAENSKAEAEVQAKEIETLLKSGSLPVKVKIVGVSSVSPELGKQFAEGAVIAGLLAVLAIAVILIVRYRSPILVLPIFFTTLAELLLILGAAAVIRWNIDLAAIAGILAAIGTGVDDQIIITDEVLSGEGRRTRRKFRIKDAFFIIFASAGTLIAAMLPLAYIGFSRGATGIGLLAGFAFTTVLGVIIGVFITRPVYARFIETFNVAGRK.

6 helical membrane passes run Val14 to Gln34, Phe238 to Ile258, Ile265 to Ala285, Leu294 to Ile314, Phe336 to Ile356, and Ile365 to Ile385.

This sequence belongs to the SecD/SecF family. SecD subfamily. Part of the protein translocation apparatus. Forms a complex with SecF.

The protein resides in the cell membrane. Functionally, involved in protein export. The protein is Protein-export membrane protein SecD of Methanothermobacter thermautotrophicus (strain ATCC 29096 / DSM 1053 / JCM 10044 / NBRC 100330 / Delta H) (Methanobacterium thermoautotrophicum).